A 194-amino-acid chain; its full sequence is Xanthine phosphoribosyltransferase (194 aa).

Xanthine contacts are provided by leucine 20 and asparagine 27. 128–132 (ANGQA) contacts 5-phospho-alpha-D-ribose 1-diphosphate. Lysine 156 is a binding site for xanthine.

Belongs to the purine/pyrimidine phosphoribosyltransferase family. Xpt subfamily. In terms of assembly, homodimer.

The protein localises to the cytoplasm. The catalysed reaction is XMP + diphosphate = xanthine + 5-phospho-alpha-D-ribose 1-diphosphate. It participates in purine metabolism; XMP biosynthesis via salvage pathway; XMP from xanthine: step 1/1. Its function is as follows. Converts the preformed base xanthine, a product of nucleic acid breakdown, to xanthosine 5'-monophosphate (XMP), so it can be reused for RNA or DNA synthesis. The protein is Xanthine phosphoribosyltransferase of Bacillus licheniformis (strain ATCC 14580 / DSM 13 / JCM 2505 / CCUG 7422 / NBRC 12200 / NCIMB 9375 / NCTC 10341 / NRRL NRS-1264 / Gibson 46).